The following is a 137-amino-acid chain: MPTINQLVRKPRKSKIEKSDSPALNIGYNSHKKVHTKIAAPQKRGVATRVGTMTPKKPNSALRKFARVRLSNLIEVTAYIPGIGHNLQEHSVVLIRGGRVKDLPGVRYHIVRGALDTAGVADRKQGRSKYGAKRPKG.

Disordered regions lie at residues 1-21 and 34-57; these read MPTINQLVRKPRKSKIEKSDS and VHTKIAAPQKRGVATRVGTMTPKK. At D102 the chain carries 3-methylthioaspartic acid.

It belongs to the universal ribosomal protein uS12 family. As to quaternary structure, part of the 30S ribosomal subunit. Contacts proteins S8 and S17. May interact with IF1 in the 30S initiation complex.

In terms of biological role, with S4 and S5 plays an important role in translational accuracy. Interacts with and stabilizes bases of the 16S rRNA that are involved in tRNA selection in the A site and with the mRNA backbone. Located at the interface of the 30S and 50S subunits, it traverses the body of the 30S subunit contacting proteins on the other side and probably holding the rRNA structure together. The combined cluster of proteins S8, S12 and S17 appears to hold together the shoulder and platform of the 30S subunit. The polypeptide is Small ribosomal subunit protein uS12 (Streptococcus uberis (strain ATCC BAA-854 / 0140J)).